The sequence spans 296 residues: NADH-cytochrome b5 reductase 2 (296 aa).

Residues 12 to 29 (LPIALGVGAASIATAIIL) form a helical membrane-spanning segment. One can recognise an FAD-binding FR-type domain in the interval 47 to 151 (NEWIDLPIIK…KGPITKWEWK (105 aa)). 154–189 (SYDSITLLGAGTGINPLYQLVHHIAENPEDNTKIHL) lines the FAD pocket.

The protein belongs to the flavoprotein pyridine nucleotide cytochrome reductase family. The cofactor is FAD.

The protein localises to the mitochondrion outer membrane. The catalysed reaction is 2 Fe(III)-[cytochrome b5] + NADH = 2 Fe(II)-[cytochrome b5] + NAD(+) + H(+). In terms of biological role, may mediate the reduction of outer membrane cytochrome b5. The protein is NADH-cytochrome b5 reductase 2 (MCR1) of Kluyveromyces lactis (strain ATCC 8585 / CBS 2359 / DSM 70799 / NBRC 1267 / NRRL Y-1140 / WM37) (Yeast).